A 478-amino-acid polypeptide reads, in one-letter code: Tubulin gamma chain (478 aa).

141–147 contacts GTP; the sequence is AGGTGSG. Residues 451-478 form a disordered region; it reads ISQKESSSLANENGNGANNKPGKSAMAL. A compositionally biased stretch (polar residues) spans 459-468; the sequence is LANENGNGAN.

Belongs to the tubulin family.

It localises to the cytoplasm. The protein localises to the cytoskeleton. It is found in the microtubule organizing center. Its subcellular location is the centrosome. In terms of biological role, tubulin is the major constituent of microtubules. The gamma chain is found at microtubule organizing centers (MTOC) such as the spindle poles or the centrosome, suggesting that it is involved in the minus-end nucleation of microtubule assembly. In Reticulomyxa filosa, this protein is Tubulin gamma chain.